A 143-amino-acid chain; its full sequence is Large-conductance mechanosensitive channel (143 aa).

A run of 2 helical transmembrane segments spans residues 10 to 30 (FAVK…GAFS) and 89 to 109 (GSFI…FLMV).

The protein belongs to the MscL family. As to quaternary structure, homopentamer.

Its subcellular location is the cell inner membrane. Functionally, channel that opens in response to stretch forces in the membrane lipid bilayer. May participate in the regulation of osmotic pressure changes within the cell. The sequence is that of Large-conductance mechanosensitive channel from Burkholderia cenocepacia (strain HI2424).